The following is a 246-amino-acid chain: E3 ubiquitin-protein ligase MARCHF2 (246 aa).

An RING-CH-type zinc finger spans residues 56-116 (GTQSDGPICR…ELCHTEFAVE (61 aa)). Zn(2+) contacts are provided by Cys64, Cys67, Cys80, Cys82, His90, Cys93, Cys106, and Cys109. 2 helical membrane-spanning segments follow: residues 138 to 158 (LFCD…SGWL) and 175 to 195 (AVGL…WTLV).

Its subcellular location is the endoplasmic reticulum membrane. The protein resides in the lysosome membrane. The protein localises to the endosome membrane. The enzyme catalyses S-ubiquitinyl-[E2 ubiquitin-conjugating enzyme]-L-cysteine + [acceptor protein]-L-lysine = [E2 ubiquitin-conjugating enzyme]-L-cysteine + N(6)-ubiquitinyl-[acceptor protein]-L-lysine.. Its pathway is protein modification; protein ubiquitination. Functionally, E3 ubiquitin-protein ligase which may be involved in endosomal trafficking. E3 ubiquitin ligases accept ubiquitin from an E2 ubiquitin-conjugating enzyme in the form of a thioester and then directly transfer the ubiquitin to targeted substrates. This chain is E3 ubiquitin-protein ligase MARCHF2 (marchf2), found in Xenopus laevis (African clawed frog).